Reading from the N-terminus, the 120-residue chain is MFLLYEYDIFWAFLMISSVIPILAFLISGVLAPISEGPEKLSSYESGIEPIGDAWIQFRIRYYMFALVFVVFDVETVFLYPWAVSFDILGVYVFIEALIFVLIPVVGSVYAWRKGALEWS.

The next 3 membrane-spanning stretches (helical) occupy residues 9 to 29 (IFWA…LISG), 64 to 84 (MFAL…PWAV), and 88 to 108 (ILGV…VVGS).

This sequence belongs to the complex I subunit 3 family. As to quaternary structure, NDH is composed of at least 16 different subunits, 5 of which are encoded in the nucleus.

The protein localises to the plastid. It is found in the chloroplast thylakoid membrane. It carries out the reaction a plastoquinone + NADH + (n+1) H(+)(in) = a plastoquinol + NAD(+) + n H(+)(out). The enzyme catalyses a plastoquinone + NADPH + (n+1) H(+)(in) = a plastoquinol + NADP(+) + n H(+)(out). NDH shuttles electrons from NAD(P)H:plastoquinone, via FMN and iron-sulfur (Fe-S) centers, to quinones in the photosynthetic chain and possibly in a chloroplast respiratory chain. The immediate electron acceptor for the enzyme in this species is believed to be plastoquinone. Couples the redox reaction to proton translocation, and thus conserves the redox energy in a proton gradient. The chain is NAD(P)H-quinone oxidoreductase subunit 3, chloroplastic from Nymphaea alba (White water-lily).